Reading from the N-terminus, the 255-residue chain is uncharacterized protein (255 aa).

This is an uncharacterized protein from Paracoccus denitrificans.